Consider the following 230-residue polypeptide: Large ribosomal subunit protein uL3 (230 aa).

2 disordered regions span residues 125-149 (QAIG…SLGD) and 210-230 (PNPK…VKNE).

It belongs to the universal ribosomal protein uL3 family. As to quaternary structure, part of the 50S ribosomal subunit. Forms a cluster with proteins L14 and L19.

In terms of biological role, one of the primary rRNA binding proteins, it binds directly near the 3'-end of the 23S rRNA, where it nucleates assembly of the 50S subunit. The protein is Large ribosomal subunit protein uL3 of Mesomycoplasma hyopneumoniae (strain 232) (Mycoplasma hyopneumoniae).